Here is a 453-residue protein sequence, read N- to C-terminus: Ezy-1 protein (453 aa).

The signal sequence occupies residues 1 to 28; sequence MQLSNSLRSARSAAASSGCALASRPVVA. Disordered regions lie at residues 167 to 187, 272 to 307, and 412 to 453; these read SDGGGDESGDRDTADAADADG, TGKAEPGAEGDDGEGEEEGEAQDVGEDAVDSSSSGG, and SAGD…SPNM. Over residues 279–300 the composition is skewed to acidic residues; it reads AEGDDGEGEEEGEAQDVGEDAV. Residues 415 to 425 show a composition bias toward basic and acidic residues; it reads DGHEPEPKRPE.

The polypeptide is Ezy-1 protein (Ezy-1) (Chlamydomonas reinhardtii (Chlamydomonas smithii)).